A 168-amino-acid chain; its full sequence is Variant surface antigen D (168 aa).

An N-terminal signal peptide occupies residues 1–29 (MKKSIFSKKLLVSFGSLVTLAAIPLIAIS). C30 carries N-palmitoyl cysteine lipidation. The S-diacylglycerol cysteine moiety is linked to residue C30. Residues 33–168 (TNTDQSQQPG…STSTSNMNTR (136 aa)) form a disordered region. Low complexity-rich tracts occupy residues 35–44 (TDQSQQPGSG) and 52–71 (GTTTGTDSTTGGQTGSESGT). Positions 72–81 (TTGGQTGTTT) are enriched in gly residues. 7 repeat units span residues 81–92 (TGGQSDSTSTSK), 93–104 (EQGSSDSTSTSK), 105–116 (EQGSSDSTSTSK), 117–128 (EQGSSDSTSTSK), 129–140 (EQGSSDSTSTSK), 141–152 (EQGSSDSTSTSK), and 153–164 (EQGSSDSTSTSN). The 7 X 12 AA tandem repeats stretch occupies residues 81–164 (TGGQSDSTST…GSSDSTSTSN (84 aa)). Positions 82 to 168 (GGQSDSTSTS…STSTSNMNTR (87 aa)) are enriched in low complexity.

The protein localises to the cell membrane. Responsible for the antigenic diversity for host adaptation. Expression in E.coli of a construct containing vlpD, vlpE, and vlpF yields antigenically distinguishable products corresponding to each gene. This is Variant surface antigen D (vlpD) from Mesomycoplasma hyorhinis (Mycoplasma hyorhinis).